Here is a 367-residue protein sequence, read N- to C-terminus: Voltage-gated potassium channel subunit beta-2 (367 aa).

Residues Ser9, Ser14, and Ser20 each carry the phosphoserine modification. Arg28 carries the asymmetric dimethylarginine; alternate modification. Arg28 bears the Omega-N-methylarginine; alternate mark. The residue at position 31 (Ser31) is a Phosphoserine. Positions 56, 57, 63, and 85 each coordinate NADP(+). The active-site Proton donor/acceptor is the Tyr90. The residue at position 112 (Ser112) is a Phosphoserine. N6-acetyllysine is present on Lys124. NADP(+)-binding residues include Asn158, Ser188, Arg189, Gln214, Trp243, Ser244, Pro245, Leu246, Ala247, Cys248, Lys254, Tyr262, Arg264, Gly323, Ser325, Gln329, Glu332, and Asn333.

It belongs to the shaker potassium channel beta subunit family. Homotetramer. Interaction with tetrameric potassium channel alpha subunits gives rise to a heterooctamer. Identified in potassium channel complexes containing KCNA1, KCNA2, KCNA4, KCNA5, KCNA6, KCNAB1, KCNAB2 and KCND3. Interacts (in unphosphorylated form) with MAPRE1. Forms a ternary complex with SQSTM1 and PRKCZ. In terms of processing, phosphorylated by PRKCZ; may be regulated by incorporation in a complex composed of PRKCZ and SQSTM1. In terms of tissue distribution, detected in brain. Detected at basket cell terminals in cerebellum and in the juxtaparanodal region of nodes of Ranvier (at protein level). Strongest expression in brain and eye. Highest levels in brain detected in brainstem and diencephalon. Strong expression also detected in lung and heart. Moderate expression in kidney, T-lymphocytes and skeletal muscle.

It localises to the cytoplasm. It is found in the membrane. The protein resides in the cell membrane. The protein localises to the cell projection. Its subcellular location is the axon. It localises to the synapse. It is found in the synaptosome. The protein resides in the cytoskeleton. It carries out the reaction hydroxyacetone + NADP(+) = methylglyoxal + NADPH + H(+). It catalyses the reaction (E)-4-oxonon-2-en-1-ol + NADP(+) = (E)-4-oxonon-2-enal + NADPH + H(+). Functionally, regulatory subunit of the voltage-gated potassium (Kv) Shaker channel family. Shaker channels are composed of pore-forming and potassium-conducting alpha subunits and of regulatory beta subunits. The beta-2/KCNAB2 subunit promotes potassium channel closure via a mechanism that does not involve physical obstruction of the channel pore. Promotes the inactivation of Kv1.4/KCNA4 and Kv1.5/KCNA5 alpha subunit-containing channels. Displays nicotinamide adenine dinucleotide phosphate (NADPH)-dependent aldoketoreductase activity by catalyzing the NADPH-dependent reduction of a wide range of aldehyde and ketone substrates. Substrate specificity includes methylglyoxal, 9,10-phenanthrenequinone, prostaglandin J2, 4-nitrobenzaldehyde, 4-nitroacetophenone and 4-oxo-trans-2-nonenal (in vitro, no physiological substrate identified yet). The binding of oxidized and reduced nucleotide cofactors alters Kv channel gating and may contribute to dynamic fine tuning of cell excitability. Contributes to the regulation of nerve signaling, and prevents neuronal hyperexcitability. The protein is Voltage-gated potassium channel subunit beta-2 of Mus musculus (Mouse).